Here is a 234-residue protein sequence, read N- to C-terminus: Peptidyl-tRNA hydrolase (234 aa).

Tyr14 is a binding site for tRNA. Catalysis depends on His19, which acts as the Proton acceptor. Residues Phe64, Asn66, and Asn112 each contribute to the tRNA site. Positions Thr187 to Asp234 are disordered.

The protein belongs to the PTH family. In terms of assembly, monomer.

It is found in the cytoplasm. The enzyme catalyses an N-acyl-L-alpha-aminoacyl-tRNA + H2O = an N-acyl-L-amino acid + a tRNA + H(+). Its function is as follows. Hydrolyzes ribosome-free peptidyl-tRNAs (with 1 or more amino acids incorporated), which drop off the ribosome during protein synthesis, or as a result of ribosome stalling. In terms of biological role, catalyzes the release of premature peptidyl moieties from peptidyl-tRNA molecules trapped in stalled 50S ribosomal subunits, and thus maintains levels of free tRNAs and 50S ribosomes. This chain is Peptidyl-tRNA hydrolase, found in Allorhizobium ampelinum (strain ATCC BAA-846 / DSM 112012 / S4) (Agrobacterium vitis (strain S4)).